The following is a 338-amino-acid chain: Fructose-1,6-bisphosphatase class 1 (338 aa).

Positions 94, 116, 118, and 119 each coordinate Mg(2+). Substrate contacts are provided by residues Asp-119–Ser-122, Asn-210, and Lys-276. Glu-282 contacts Mg(2+).

Belongs to the FBPase class 1 family. As to quaternary structure, homotetramer. It depends on Mg(2+) as a cofactor.

The protein localises to the cytoplasm. The catalysed reaction is beta-D-fructose 1,6-bisphosphate + H2O = beta-D-fructose 6-phosphate + phosphate. The protein operates within carbohydrate biosynthesis; gluconeogenesis. This is Fructose-1,6-bisphosphatase class 1 from Paraburkholderia phytofirmans (strain DSM 17436 / LMG 22146 / PsJN) (Burkholderia phytofirmans).